The primary structure comprises 305 residues: Superkiller complex protein 8 (305 aa).

7 WD repeats span residues 14 to 57, 62 to 101, 104 to 143, 146 to 187, 188 to 227, 230 to 269, and 272 to 305; these read AHED…LELQ, GHQL…QIRA, AGPV…KEYS, TRGK…HTLE, GHAM…LAAT, GHGS…CVHT, and DHQD…DCPI.

It belongs to the SKI8 family. As to quaternary structure, component of the PAF1 complex. Component of the SKI complex.

Its subcellular location is the nucleus. It localises to the cytoplasm. Functionally, component of the PAF1 complex (PAF1C) which has multiple functions during transcription by RNA polymerase II and is implicated in regulation of development and maintenance of embryonic stem cell pluripotency. PAF1C associates with RNA polymerase II through interaction with POLR2A CTD non-phosphorylated and 'Ser-2'- and 'Ser-5'-phosphorylated forms and is involved in transcriptional elongation, acting both independently and synergistically with TCEA1 and in cooperation with the DSIF complex and HTATSF1. Also acts as a component of the SKI complex, a multiprotein complex that assists the RNA-degrading exosome during the mRNA decay and quality-control pathways. The SKI complex catalyzes mRNA extraction from 80S ribosomal complexes in the 3'-5' direction and channels mRNA to the cytosolic exosome for degradation. The polypeptide is Superkiller complex protein 8 (skic8) (Xenopus tropicalis (Western clawed frog)).